Here is a 528-residue protein sequence, read N- to C-terminus: GMP synthase [glutamine-hydrolyzing] (528 aa).

The 192-residue stretch at 13 to 204 folds into the Glutamine amidotransferase type-1 domain; it reads AIVILDFGSQ…VNHICGCEQD (192 aa). The Nucleophile role is filled by cysteine 90. Residues histidine 178 and glutamate 180 contribute to the active site. The GMPS ATP-PPase domain maps to 205-403; the sequence is WTTNAFIDEA…LGLPEEIVRR (199 aa). 232–238 provides a ligand contact to ATP; that stretch reads SGGVDSS.

Homodimer.

The enzyme catalyses XMP + L-glutamine + ATP + H2O = GMP + L-glutamate + AMP + diphosphate + 2 H(+). It participates in purine metabolism; GMP biosynthesis; GMP from XMP (L-Gln route): step 1/1. Catalyzes the synthesis of GMP from XMP. The sequence is that of GMP synthase [glutamine-hydrolyzing] from Synechococcus sp. (strain CC9902).